The primary structure comprises 192 residues: GTP cyclohydrolase-2 (192 aa).

A GTP-binding site is contributed by arginine 47–glutamate 51. 3 residues coordinate Zn(2+): cysteine 52, cysteine 63, and cysteine 65. GTP is bound by residues glutamine 68, glutamate 90–arginine 92, and threonine 112. The active-site Proton acceptor is aspartate 124. The Nucleophile role is filled by arginine 126. Residues threonine 147 and lysine 152 each contribute to the GTP site.

This sequence belongs to the GTP cyclohydrolase II family. Requires Zn(2+) as cofactor.

The enzyme catalyses GTP + 4 H2O = 2,5-diamino-6-hydroxy-4-(5-phosphoribosylamino)-pyrimidine + formate + 2 phosphate + 3 H(+). The protein operates within cofactor biosynthesis; riboflavin biosynthesis; 5-amino-6-(D-ribitylamino)uracil from GTP: step 1/4. Catalyzes the conversion of GTP to 2,5-diamino-6-ribosylamino-4(3H)-pyrimidinone 5'-phosphate (DARP), formate and pyrophosphate. This chain is GTP cyclohydrolase-2, found in Picrophilus torridus (strain ATCC 700027 / DSM 9790 / JCM 10055 / NBRC 100828 / KAW 2/3).